A 193-amino-acid chain; its full sequence is Transmembrane protein 276 (193 aa).

An N-terminal signal peptide occupies residues 1 to 32 (MTPRPGGEWSSALSHLALGAVSLHAALSTAQA). The next 4 membrane-spanning stretches (helical) occupy residues 35–55 (GAAA…ASGL), 63–83 (AGAW…FHWV), 89–109 (SANL…HLGA), and 114–134 (VAGQ…AVFT).

It is found in the membrane. The sequence is that of Transmembrane protein 276 from Bos taurus (Bovine).